The sequence spans 598 residues: DNA mismatch repair protein MutL (598 aa).

The protein belongs to the DNA mismatch repair MutL/HexB family.

Its function is as follows. This protein is involved in the repair of mismatches in DNA. It is required for dam-dependent methyl-directed DNA mismatch repair. May act as a 'molecular matchmaker', a protein that promotes the formation of a stable complex between two or more DNA-binding proteins in an ATP-dependent manner without itself being part of a final effector complex. This chain is DNA mismatch repair protein MutL, found in Thiobacillus denitrificans (strain ATCC 25259 / T1).